We begin with the raw amino-acid sequence, 202 residues long: Recombination protein RecR (202 aa).

Residues 61 to 76 (CARCNSFTEDEVCATC) form a C4-type zinc finger. The Toprim domain occupies 84–179 (GLLCIVETPA…KVTRLARGVP (96 aa)).

The protein belongs to the RecR family.

In terms of biological role, may play a role in DNA repair. It seems to be involved in an RecBC-independent recombinational process of DNA repair. It may act with RecF and RecO. The sequence is that of Recombination protein RecR from Bordetella pertussis (strain Tohama I / ATCC BAA-589 / NCTC 13251).